A 338-amino-acid chain; its full sequence is Fructose-1,6-bisphosphatase 1 (338 aa).

Ala2 carries the N-acetylalanine modification. AMP is bound by residues 18-22 (VMEEG) and 28-32 (TGELT). Asp69 and Glu98 together coordinate Mg(2+). 113–114 (KY) is a binding site for AMP. 3 residues coordinate Mg(2+): Asp119, Leu121, and Asp122. 122 to 125 (DGSS) is a binding site for substrate. Residue Arg141 participates in AMP binding. N6-succinyllysine is present on Lys151. Residues 213–216 (NEGY), 244–249 (RYVGSM), Tyr265, and 275–277 (KLR) contribute to the substrate site. Phosphotyrosine occurs at positions 216, 245, and 265. Position 281 (Glu281) interacts with Mg(2+).

Belongs to the FBPase class 1 family. In terms of assembly, homotetramer. The cofactor is Mg(2+). As to expression, expressed in pancreatic islets.

It catalyses the reaction beta-D-fructose 1,6-bisphosphate + H2O = beta-D-fructose 6-phosphate + phosphate. It participates in carbohydrate biosynthesis; gluconeogenesis. With respect to regulation, subject to complex allosteric regulation. The enzyme can assume an active R-state, or an inactive T-state. Intermediate conformations may exist. AMP acts as an allosteric inhibitor. AMP binding affects the turnover of bound substrate and not the affinity for substrate. Fructose 2,6-bisphosphate acts as a competitive inhibitor. Fructose 2,6-bisphosphate and AMP have synergistic effects. In terms of biological role, catalyzes the hydrolysis of fructose 1,6-bisphosphate to fructose 6-phosphate in the presence of divalent cations, acting as a rate-limiting enzyme in gluconeogenesis. Plays a role in regulating glucose sensing and insulin secretion of pancreatic beta-cells. Appears to modulate glycerol gluconeogenesis in liver. Important regulator of appetite and adiposity; increased expression of the protein in liver after nutrient excess increases circulating satiety hormones and reduces appetite-stimulating neuropeptides and thus seems to provide a feedback mechanism to limit weight gain. The polypeptide is Fructose-1,6-bisphosphatase 1 (FBP1) (Homo sapiens (Human)).